We begin with the raw amino-acid sequence, 347 residues long: Biotin synthase (347 aa).

A Radical SAM core domain is found at asparagine 54–lysine 273. [4Fe-4S] cluster-binding residues include cysteine 69, cysteine 73, and cysteine 76. [2Fe-2S] cluster is bound by residues cysteine 113, cysteine 144, cysteine 204, and arginine 277.

It belongs to the radical SAM superfamily. Biotin synthase family. As to quaternary structure, homodimer. It depends on [4Fe-4S] cluster as a cofactor. [2Fe-2S] cluster is required as a cofactor.

The enzyme catalyses (4R,5S)-dethiobiotin + (sulfur carrier)-SH + 2 reduced [2Fe-2S]-[ferredoxin] + 2 S-adenosyl-L-methionine = (sulfur carrier)-H + biotin + 2 5'-deoxyadenosine + 2 L-methionine + 2 oxidized [2Fe-2S]-[ferredoxin]. It functions in the pathway cofactor biosynthesis; biotin biosynthesis; biotin from 7,8-diaminononanoate: step 2/2. In terms of biological role, catalyzes the conversion of dethiobiotin (DTB) to biotin by the insertion of a sulfur atom into dethiobiotin via a radical-based mechanism. The chain is Biotin synthase from Afipia carboxidovorans (strain ATCC 49405 / DSM 1227 / KCTC 32145 / OM5) (Oligotropha carboxidovorans).